The chain runs to 481 residues: Transcription factor TGA9 (481 aa).

The interval Gln-91 to Arg-181 is disordered. Over residues Ser-97–Ser-109 the composition is skewed to low complexity. Over residues Ala-110–Ser-126 the composition is skewed to polar residues. Residues Ser-143–Thr-155 are compositionally biased toward low complexity. The Nuclear localization signal signature appears at Lys-165–Gly-172. Residues Asp-176–Arg-220 enclose the bZIP domain. The interval Lys-178–Lys-198 is basic motif. Residues Leu-204–Leu-218 are leucine-zipper. A DOG1 domain is found at Ala-242 to Arg-450.

The protein belongs to the bZIP family. In terms of assembly, homodimer. Binds DNA as a dimer. Interacts with floral glutaredoxins GRXC7/ROXY1 and GRXC8/ROXY2 in the nucleus. Interacts with TGA1, TGA2, TGA3, TGA4, TGA5, TGA6, TGA7, TGA10 and PAN. As to expression, mostly expressed in stems, inflorescence apex and flowers, and, to a lower extent, in seedlings, leaves and siliques.

It localises to the nucleus. In terms of biological role, together with TGA10, basic leucine-zipper transcription factor required for anther development, probably via the activation of SPL expression in anthers and via the regulation of genes with functions in early and middle tapetal development. Required for signaling responses to pathogen-associated molecular patterns (PAMPs) such as flg22 that involves chloroplastic reactive oxygen species (ROS) production and subsequent expression of H(2)O(2)-responsive genes. This chain is Transcription factor TGA9, found in Arabidopsis thaliana (Mouse-ear cress).